The sequence spans 301 residues: N-acetylmuramic acid 6-phosphate etherase (301 aa).

The region spanning 57-220 (VVERLRAGGR…STISMVRLGK (164 aa)) is the SIS domain. Glu85 serves as the catalytic Proton donor. The active site involves Glu116.

The protein belongs to the GCKR-like family. MurNAc-6-P etherase subfamily. In terms of assembly, homodimer.

It catalyses the reaction N-acetyl-D-muramate 6-phosphate + H2O = N-acetyl-D-glucosamine 6-phosphate + (R)-lactate. Its pathway is amino-sugar metabolism; N-acetylmuramate degradation. Functionally, specifically catalyzes the cleavage of the D-lactyl ether substituent of MurNAc 6-phosphate, producing GlcNAc 6-phosphate and D-lactate. This chain is N-acetylmuramic acid 6-phosphate etherase, found in Rubrobacter xylanophilus (strain DSM 9941 / JCM 11954 / NBRC 16129 / PRD-1).